Here is a 730-residue protein sequence, read N- to C-terminus: ABC transporter G family member 20 (730 aa).

One can recognise an ABC transporter domain in the interval 15–244; sequence ISLKNVCRGY…YESQTLEEVF (230 aa). Residue 47-54 coordinates ATP; sequence GASGSGKT. The segment at 281–303 is disordered; that stretch reads VNNNNNNNNNNNNNNYNNNDDEE. The span at 282 to 298 shows a compositional bias: low complexity; sequence NNNNNNNNNNNNNNYNN. Positions 489–717 constitute an ABC transmembrane type-2 domain; that stretch reads SFETLAKQQA…FIAVLALNEK (229 aa). 5 helical membrane passes run 520–540, 572–592, 602–622, 634–654, and 692–712; these read FIDF…AISI, FLGH…IAIY, IALV…LGLV, IQLS…LWPL, and VWVA…IAVL.

The protein belongs to the ABC transporter superfamily.

The protein resides in the membrane. The sequence is that of ABC transporter G family member 20 (abcG20) from Dictyostelium discoideum (Social amoeba).